Consider the following 616-residue polypeptide: Dihydroxy-acid dehydratase (616 aa).

Position 81 (aspartate 81) interacts with Mg(2+). Cysteine 122 contributes to the [2Fe-2S] cluster binding site. 2 residues coordinate Mg(2+): aspartate 123 and lysine 124. Lysine 124 is modified (N6-carboxylysine). Cysteine 195 is a [2Fe-2S] cluster binding site. Glutamate 491 is a Mg(2+) binding site. Residue serine 517 is the Proton acceptor of the active site.

It belongs to the IlvD/Edd family. In terms of assembly, homodimer. The cofactor is [2Fe-2S] cluster. Mg(2+) is required as a cofactor.

It carries out the reaction (2R)-2,3-dihydroxy-3-methylbutanoate = 3-methyl-2-oxobutanoate + H2O. The enzyme catalyses (2R,3R)-2,3-dihydroxy-3-methylpentanoate = (S)-3-methyl-2-oxopentanoate + H2O. It participates in amino-acid biosynthesis; L-isoleucine biosynthesis; L-isoleucine from 2-oxobutanoate: step 3/4. The protein operates within amino-acid biosynthesis; L-valine biosynthesis; L-valine from pyruvate: step 3/4. In terms of biological role, functions in the biosynthesis of branched-chain amino acids. Catalyzes the dehydration of (2R,3R)-2,3-dihydroxy-3-methylpentanoate (2,3-dihydroxy-3-methylvalerate) into 2-oxo-3-methylpentanoate (2-oxo-3-methylvalerate) and of (2R)-2,3-dihydroxy-3-methylbutanoate (2,3-dihydroxyisovalerate) into 2-oxo-3-methylbutanoate (2-oxoisovalerate), the penultimate precursor to L-isoleucine and L-valine, respectively. The sequence is that of Dihydroxy-acid dehydratase from Erwinia tasmaniensis (strain DSM 17950 / CFBP 7177 / CIP 109463 / NCPPB 4357 / Et1/99).